The sequence spans 250 residues: DNA polymerase sliding clamp (250 aa).

This sequence belongs to the PCNA family. In terms of assembly, homotrimer. The subunits circularize to form a toroid; DNA passes through its center. Replication factor C (RFC) is required to load the toroid on the DNA.

In terms of biological role, sliding clamp subunit that acts as a moving platform for DNA processing. Responsible for tethering the catalytic subunit of DNA polymerase and other proteins to DNA during high-speed replication. The polypeptide is DNA polymerase sliding clamp (Methanococcus maripaludis (strain C6 / ATCC BAA-1332)).